Here is a 178-residue protein sequence, read N- to C-terminus: Anthranilate synthase component 2 (178 aa).

Residues 1–178 (MIVVVDCKDS…RNFVEMCHDG (178 aa)) form the Glutamine amidotransferase type-1 domain. Position 49-51 (49-51 (GPG)) interacts with L-glutamine. Catalysis depends on cysteine 71, which acts as the Nucleophile; for GATase activity. L-glutamine-binding positions include glutamine 75 and 120–121 (SL). Active-site for GATase activity residues include histidine 155 and glutamate 157.

As to quaternary structure, heterotetramer consisting of two non-identical subunits: a beta subunit (TrpG) and a large alpha subunit (TrpE).

It carries out the reaction chorismate + L-glutamine = anthranilate + pyruvate + L-glutamate + H(+). It participates in amino-acid biosynthesis; L-tryptophan biosynthesis; L-tryptophan from chorismate: step 1/5. Part of a heterotetrameric complex that catalyzes the two-step biosynthesis of anthranilate, an intermediate in the biosynthesis of L-tryptophan. In the first step, the glutamine-binding beta subunit (TrpG) of anthranilate synthase (AS) provides the glutamine amidotransferase activity which generates ammonia as a substrate that, along with chorismate, is used in the second step, catalyzed by the large alpha subunit of AS (TrpE) to produce anthranilate. In the absence of TrpG, TrpE can synthesize anthranilate directly from chorismate and high concentrations of ammonia. This chain is Anthranilate synthase component 2 (trpG), found in Archaeoglobus fulgidus (strain ATCC 49558 / DSM 4304 / JCM 9628 / NBRC 100126 / VC-16).